A 343-amino-acid chain; its full sequence is DNA repair and recombination protein RadA (343 aa).

Position 107–114 (107–114 (GEFGAGKS)) interacts with ATP.

This sequence belongs to the eukaryotic RecA-like protein family.

Involved in DNA repair and in homologous recombination. Binds and assemble on single-stranded DNA to form a nucleoprotein filament. Hydrolyzes ATP in a ssDNA-dependent manner and promotes DNA strand exchange between homologous DNA molecules. This chain is DNA repair and recombination protein RadA, found in Halobacterium salinarum (strain ATCC 29341 / DSM 671 / R1).